The sequence spans 731 residues: Wall-associated receptor kinase-like 5 (731 aa).

The first 26 residues, Met-1 to Ala-26, serve as a signal peptide directing secretion. At Ala-27 to Val-360 the chain is on the extracellular side. Residues Asn-37, Asn-43, Asn-73, Asn-96, Asn-124, Asn-137, Asn-236, and Asn-272 are each glycosylated (N-linked (GlcNAc...) asparagine). Residues Cys-285–Cys-342 are atypical EGF-like. Disulfide bonds link Cys-287–Cys-300, Cys-322–Cys-333, and Cys-328–Cys-342. A helical membrane pass occupies residues Leu-361–Ile-381. The Cytoplasmic portion of the chain corresponds to Lys-382–Glu-731. The Protein kinase domain occupies Phe-432–Ile-705. ATP is bound by residues Leu-438–Val-446 and Lys-460. Tyr-505 is modified (phosphotyrosine). Residue Asp-557 is the Proton acceptor of the active site. 2 positions are modified to phosphothreonine: Thr-591 and Thr-596. Tyr-604 is modified (phosphotyrosine). The interval Pro-709–Glu-731 is disordered.

It belongs to the protein kinase superfamily. Ser/Thr protein kinase family. In terms of tissue distribution, preferentially expressed in roots and flowers.

It localises to the membrane. The enzyme catalyses L-seryl-[protein] + ATP = O-phospho-L-seryl-[protein] + ADP + H(+). It catalyses the reaction L-threonyl-[protein] + ATP = O-phospho-L-threonyl-[protein] + ADP + H(+). In terms of biological role, serine/threonine-protein kinase that may function as a signaling receptor of extracellular matrix component. May be involved in plant's response to pathogen infection. The protein is Wall-associated receptor kinase-like 5 (WAKL5) of Arabidopsis thaliana (Mouse-ear cress).